The chain runs to 368 residues: Biglycan (368 aa).

An N-terminal signal peptide occupies residues 1 to 16 (MKVLLLLCSCILVIHA). Positions 17-37 (LPFEQRGFWDFSMDDGMAMMK) are excised as a propeptide. 2 disulfides stabilise this stretch: C63–C69 and C67–C76. LRR repeat units lie at residues 82 to 102 (TSIP…NNKI), 103 to 126 (TEIK…NNKI), 127 to 150 (SKIN…KNNL), 151 to 171 (EEIP…ENKI), 172 to 195 (KKVP…GNPL), 196 to 220 (ENGG…EAKL), 221 to 241 (SGIP…NNKI), 242 to 265 (QAIE…HNNI), 266 to 289 (RMIE…NNKL), 290 to 312 (SKVP…SNNI), 313 to 342 (TQVG…NNPV), and 343 to 368 (PYWE…NYRK). N270 and N311 each carry an N-linked (GlcNAc...) asparagine glycan. Residues C321 and C354 are joined by a disulfide bond.

Belongs to the small leucine-rich proteoglycan (SLRP) family. SLRP class I subfamily.

It localises to the secreted. The protein localises to the extracellular space. It is found in the extracellular matrix. Its function is as follows. May be involved in collagen fiber assembly. This Xenopus laevis (African clawed frog) protein is Biglycan (bgn).